Here is a 484-residue protein sequence, read N- to C-terminus: Cobyric acid synthase (484 aa).

The GATase cobBQ-type domain occupies 251 to 438; that stretch reads ALKIAVPVLP…LHGLFASDAY (188 aa). Residue Cys333 is the Nucleophile of the active site. Residue His430 is part of the active site.

It belongs to the CobB/CobQ family. CobQ subfamily.

It functions in the pathway cofactor biosynthesis; adenosylcobalamin biosynthesis. In terms of biological role, catalyzes amidations at positions B, D, E, and G on adenosylcobyrinic A,C-diamide. NH(2) groups are provided by glutamine, and one molecule of ATP is hydrogenolyzed for each amidation. This chain is Cobyric acid synthase, found in Rhizobium etli (strain CIAT 652).